The primary structure comprises 235 residues: Claudin-15 (235 aa).

Position 1 (methionine 1) is a topological domain, cytoplasmic. Residues leucine 2–leucine 24 form a helical membrane-spanning segment. Over alanine 25–tyrosine 74 the chain is Extracellular. A disulfide bridge links cysteine 52 with cysteine 62. The chain crosses the membrane as a helical span at residues isoleucine 75–glycine 99. Topologically, residues leucine 100 to lysine 115 are cytoplasmic. Serine 111 is modified (phosphoserine). The chain crosses the membrane as a helical span at residues leucine 116 to phenylalanine 140. Residues asparagine 141 to glycine 159 lie on the Extracellular side of the membrane. The segment at phenylalanine 146 to phenylalanine 147 is important for the formation of tight-junction strand-like structures. Residues proline 160 to asparagine 182 form a helical membrane-spanning segment. Over cysteine 183–valine 235 the chain is Cytoplasmic. 2 positions are modified to phosphoserine: serine 218 and serine 225.

This sequence belongs to the claudin family. Can form homo- and heteropolymeric tight junction strands. In terms of processing, palmitoylated.

The protein localises to the cell junction. Its subcellular location is the tight junction. It is found in the cell membrane. The enzyme catalyses Na(+)(in) = Na(+)(out). The catalysed reaction is K(+)(in) = K(+)(out). It catalyses the reaction Cs(+)(in) = Cs(+)(out). It carries out the reaction Rb(+)(in) = Rb(+)(out). The enzyme catalyses Li(+)(in) = Li(+)(out). The catalysed reaction is NH4(+)(in) = NH4(+)(out). It catalyses the reaction methylamine(out) = methylamine(in). It carries out the reaction H2O(in) = H2O(out). Functionally, forms paracellular channels: polymerizes in tight junction strands with cation- and water-selective channels through the strands, conveying epithelial permeability in a process known as paracellular tight junction permeability. In intestinal epithelium, allows for sodium and water fluxes from the peritoneal side to the lumen of the intestine to regulate nutrient absorption and intestinal morphogenesis. The sequence is that of Claudin-15 (CLDN15) from Bos taurus (Bovine).